A 307-amino-acid chain; its full sequence is 4-hydroxybenzoate octaprenyltransferase (307 aa).

Transmembrane regions (helical) follow at residues 19-39 (PVGI…AAMG), 48-68 (VTAG…AILM), 105-125 (AIAA…FLPI), 127-147 (VFYW…MKRY), 150-170 (LPQV…YVAI), 172-192 (GAAD…TVAY), 221-241 (VIII…VMWH), 243-263 (FVPT…AMMF), and 282-302 (FLAN…ACVW).

This sequence belongs to the UbiA prenyltransferase family. The cofactor is Mg(2+).

The protein resides in the cell inner membrane. It catalyses the reaction all-trans-octaprenyl diphosphate + 4-hydroxybenzoate = 4-hydroxy-3-(all-trans-octaprenyl)benzoate + diphosphate. The protein operates within cofactor biosynthesis; ubiquinone biosynthesis. Its function is as follows. Catalyzes the prenylation of para-hydroxybenzoate (PHB) with an all-trans polyprenyl group. Mediates the second step in the final reaction sequence of ubiquinone-8 (UQ-8) biosynthesis, which is the condensation of the polyisoprenoid side chain with PHB, generating the first membrane-bound Q intermediate 3-octaprenyl-4-hydroxybenzoate. The polypeptide is 4-hydroxybenzoate octaprenyltransferase (Psychrobacter arcticus (strain DSM 17307 / VKM B-2377 / 273-4)).